Here is a 237-residue protein sequence, read N- to C-terminus: Protein GrpE (237 aa).

Disordered stretches follow at residues 24-56 and 204-237; these read LILEDSEAEAGTSSGETAAEPSPDPGEALKQLQ and SAGSPSSEPSPPAQATIEAGPENTPASPQNPQPS.

It belongs to the GrpE family. As to quaternary structure, homodimer.

Its subcellular location is the cytoplasm. Its function is as follows. Participates actively in the response to hyperosmotic and heat shock by preventing the aggregation of stress-denatured proteins, in association with DnaK and GrpE. It is the nucleotide exchange factor for DnaK and may function as a thermosensor. Unfolded proteins bind initially to DnaJ; upon interaction with the DnaJ-bound protein, DnaK hydrolyzes its bound ATP, resulting in the formation of a stable complex. GrpE releases ADP from DnaK; ATP binding to DnaK triggers the release of the substrate protein, thus completing the reaction cycle. Several rounds of ATP-dependent interactions between DnaJ, DnaK and GrpE are required for fully efficient folding. In Synechococcus sp. (strain JA-2-3B'a(2-13)) (Cyanobacteria bacterium Yellowstone B-Prime), this protein is Protein GrpE.